A 192-amino-acid chain; its full sequence is Imidazoleglycerol-phosphate dehydratase (192 aa).

The protein belongs to the imidazoleglycerol-phosphate dehydratase family.

The protein localises to the cytoplasm. It carries out the reaction D-erythro-1-(imidazol-4-yl)glycerol 3-phosphate = 3-(imidazol-4-yl)-2-oxopropyl phosphate + H2O. The protein operates within amino-acid biosynthesis; L-histidine biosynthesis; L-histidine from 5-phospho-alpha-D-ribose 1-diphosphate: step 6/9. In Staphylococcus epidermidis (strain ATCC 35984 / DSM 28319 / BCRC 17069 / CCUG 31568 / BM 3577 / RP62A), this protein is Imidazoleglycerol-phosphate dehydratase.